The following is a 204-amino-acid chain: MPYIPMPYVVEQTHRGERSYDIYSRLLKDRIVFLGTPIDDDVANVVIAQLLFLESEDPDKDISLYINSPGGSVTSGLAIYDTMQYVKPQVSTICLGQAASMGAFLLAGGAAGKRFAVPNARIMIHQPMGGFQGQATDIDIQAREILRLKAKLNDILAKHTKQPLERIEKDTDRDYFMGAGEAKEYGLIDEVIVHKPKATEKKAQ.

S100 acts as the Nucleophile in catalysis. H125 is an active-site residue.

The protein belongs to the peptidase S14 family. Fourteen ClpP subunits assemble into 2 heptameric rings which stack back to back to give a disk-like structure with a central cavity, resembling the structure of eukaryotic proteasomes.

The protein localises to the cytoplasm. It carries out the reaction Hydrolysis of proteins to small peptides in the presence of ATP and magnesium. alpha-casein is the usual test substrate. In the absence of ATP, only oligopeptides shorter than five residues are hydrolyzed (such as succinyl-Leu-Tyr-|-NHMec, and Leu-Tyr-Leu-|-Tyr-Trp, in which cleavage of the -Tyr-|-Leu- and -Tyr-|-Trp bonds also occurs).. In terms of biological role, cleaves peptides in various proteins in a process that requires ATP hydrolysis. Has a chymotrypsin-like activity. Plays a major role in the degradation of misfolded proteins. In Anaeromyxobacter sp. (strain Fw109-5), this protein is ATP-dependent Clp protease proteolytic subunit.